The primary structure comprises 85 residues: ATP synthase epsilon chain (85 aa).

This sequence belongs to the ATPase epsilon chain family. As to quaternary structure, F-type ATPases have 2 components, CF(1) - the catalytic core - and CF(0) - the membrane proton channel. CF(1) has five subunits: alpha(3), beta(3), gamma(1), delta(1), epsilon(1). CF(0) has three main subunits: a, b and c.

The protein resides in the cell membrane. Its function is as follows. Produces ATP from ADP in the presence of a proton gradient across the membrane. The protein is ATP synthase epsilon chain of Frankia casuarinae (strain DSM 45818 / CECT 9043 / HFP020203 / CcI3).